Here is a 207-residue protein sequence, read N- to C-terminus: MSYSTFKRSLEIEVISAEGLKVDRKPLKKKTYSVVRIDEKSWASKVDELGGSYPIWKDRFDMEMPINASVRFISIEVYYRTSGSGRDKNVGYAKIPVTDFMGGFAPQGHLNFLSYRLRDEYGDKCGIVNVSIMVKPDGNDHKSSLPSSSFAVAPVDYAACSWQATAAARNNQMWRPRTSSSMVSTAGYGGGRVVTGVPVWCAYQRPS.

Residues 1–112 enclose the C2 domain; the sequence is MSYSTFKRSL…GFAPQGHLNF (112 aa).

As to quaternary structure, interacts with BON1, BON2 and BON3. In terms of tissue distribution, expressed in roots, leaves, stems and flowers.

It localises to the membrane. Its function is as follows. Negative regulator of cell death and defense responses. Exhibits calcium-dependent phospholipid binding properties. The chain is BON1-associated protein 2 (BAP2) from Arabidopsis thaliana (Mouse-ear cress).